Reading from the N-terminus, the 400-residue chain is Sphingosine 1-phosphate receptor 5 (400 aa).

The Extracellular portion of the chain corresponds to 1-41; sequence MEPGLLRPAPVSEVIVLHYNYTGKLRGARYQPGAGLRADAA. The N-linked (GlcNAc...) asparagine glycan is linked to Asn20. A helical membrane pass occupies residues 42–62; that stretch reads VCLAVCAFIVLENLAVLLVLV. Residues 63 to 68 lie on the Cytoplasmic side of the membrane; it reads RHPRFH. A helical membrane pass occupies residues 69–89; sequence APMFLLLGSLTLSDLLAGAAY. Residues 90–111 are Extracellular-facing; the sequence is ATNILLSGPLTLRLSPALWFAR. Residues 112-132 form a helical membrane-spanning segment; that stretch reads EGGVFVALAASVLSLLAIALE. Over 133 to 151 the chain is Cytoplasmic; that stretch reads RHLTMARRGPAPAASRART. Residues 152–172 form a helical membrane-spanning segment; the sequence is LAMAVAAWGASLLLGLLPALG. Residues 173–192 are Extracellular-facing; the sequence is WNCLGRLETCSTVLPLYAKA. A helical membrane pass occupies residues 193–213; that stretch reads YVLFCVLAFLGILAAICALYA. Residues 214 to 253 are Cytoplasmic-facing; it reads RIYCQVRANARRLRAGPGSRRATSSSRSRHTPRSLALLRT. A helical membrane pass occupies residues 254 to 274; sequence LSVVLLAFVACWGPLFLLLLL. At 275–288 the chain is on the extracellular side; it reads DVACPARACPVLLQ. Residues 289–309 traverse the membrane as a helical segment; the sequence is ADPFLGLAMANSLLNPIIYTF. The Cytoplasmic segment spans residues 310 to 400; that stretch reads TNRDLRHALL…NRSLVPTATD (91 aa). Cys324 carries the S-palmitoyl cysteine lipid modification. Residues 331–400 are disordered; that stretch reads QDSSNSLQRS…NRSLVPTATD (70 aa). 3 positions are modified to phosphoserine: Ser340, Ser342, and Ser384. Positions 360–400 are enriched in polar residues; that stretch reads DRSSSPSEHLSPQQDGVDTSCSTGSPGVATANRSLVPTATD.

This sequence belongs to the G-protein coupled receptor 1 family. Expressed in spleen and brain. In the CNS expression is restricted to oligodendrocytes.

The protein localises to the cell membrane. Receptor for the lysosphingolipid sphingosine 1-phosphate (S1P). S1P is a bioactive lysophospholipid that elicits diverse physiological effect on most types of cells and tissues. Is coupled to both the G(i/0)alpha and G(12) subclass of heteromeric G-proteins. S1P activation on oligodendroglial cells modulates two distinct functional pathways mediating either process retraction or cell survival. S1P activation on O4-positive pre-oligodendrocytes induces process retraction via a Rho kinase/collapsin response-mediated protein signaling pathway. The S1P-induced survival of mature oligodendrocytes is mediated through a pertussis toxin-sensitive, Akt-dependent pathway. S1P activation on oligodendroglial cells modulates two distinct functional pathways mediating either process retraction or cell survival. These effects depend on the developmental stage of the cell. This chain is Sphingosine 1-phosphate receptor 5 (S1pr5), found in Mus musculus (Mouse).